The chain runs to 352 residues: 3-isopropylmalate dehydrogenase (352 aa).

71–87 (GAHDSAWNQLPRHLRPE) contributes to the NAD(+) binding site. Substrate contacts are provided by Arg-94, Arg-104, Arg-132, and Asp-218. Asp-218, Asp-242, and Asp-246 together coordinate Mg(2+). Residue 275-287 (GSAPDIAGQGVAN) participates in NAD(+) binding.

Belongs to the isocitrate and isopropylmalate dehydrogenases family. LeuB type 1 subfamily. In terms of assembly, homodimer. Mg(2+) serves as cofactor. The cofactor is Mn(2+).

The protein resides in the cytoplasm. It carries out the reaction (2R,3S)-3-isopropylmalate + NAD(+) = 4-methyl-2-oxopentanoate + CO2 + NADH. It functions in the pathway amino-acid biosynthesis; L-leucine biosynthesis; L-leucine from 3-methyl-2-oxobutanoate: step 3/4. Catalyzes the oxidation of 3-carboxy-2-hydroxy-4-methylpentanoate (3-isopropylmalate) to 3-carboxy-4-methyl-2-oxopentanoate. The product decarboxylates to 4-methyl-2 oxopentanoate. The polypeptide is 3-isopropylmalate dehydrogenase (Deinococcus radiodurans (strain ATCC 13939 / DSM 20539 / JCM 16871 / CCUG 27074 / LMG 4051 / NBRC 15346 / NCIMB 9279 / VKM B-1422 / R1)).